We begin with the raw amino-acid sequence, 141 residues long: Nucleoside diphosphate kinase (141 aa).

Lys-11, Phe-59, Arg-87, Thr-93, Arg-104, and Asn-114 together coordinate ATP. His-117 acts as the Pros-phosphohistidine intermediate in catalysis.

The protein belongs to the NDK family. As to quaternary structure, homotetramer. It depends on Mg(2+) as a cofactor.

It is found in the cytoplasm. The enzyme catalyses a 2'-deoxyribonucleoside 5'-diphosphate + ATP = a 2'-deoxyribonucleoside 5'-triphosphate + ADP. It carries out the reaction a ribonucleoside 5'-diphosphate + ATP = a ribonucleoside 5'-triphosphate + ADP. Major role in the synthesis of nucleoside triphosphates other than ATP. The ATP gamma phosphate is transferred to the NDP beta phosphate via a ping-pong mechanism, using a phosphorylated active-site intermediate. The chain is Nucleoside diphosphate kinase from Hamiltonella defensa subsp. Acyrthosiphon pisum (strain 5AT).